A 634-amino-acid chain; its full sequence is Threonine--tRNA ligase (634 aa).

In terms of domain architecture, TGS spans methionine 1 to threonine 61. Positions aspartate 241–proline 532 are catalytic. Residues cysteine 332, histidine 383, and histidine 509 each contribute to the Zn(2+) site.

Belongs to the class-II aminoacyl-tRNA synthetase family. Homodimer. Zn(2+) serves as cofactor.

It localises to the cytoplasm. The enzyme catalyses tRNA(Thr) + L-threonine + ATP = L-threonyl-tRNA(Thr) + AMP + diphosphate + H(+). In terms of biological role, catalyzes the attachment of threonine to tRNA(Thr) in a two-step reaction: L-threonine is first activated by ATP to form Thr-AMP and then transferred to the acceptor end of tRNA(Thr). Also edits incorrectly charged L-seryl-tRNA(Thr). The polypeptide is Threonine--tRNA ligase (Francisella tularensis subsp. novicida (strain U112)).